Reading from the N-terminus, the 501-residue chain is DELTA-alicitoxin-Pse2a (501 aa).

Residues 1–22 form the signal peptide; sequence MSPYFKLSSALIFLAITMEALC. Residues 23–35 constitute a propeptide that is removed on maturation; it reads SPIENTSTSNKDN. The MACPF domain maps to 23–359; the sequence is SPIENTSTSN…GFLHFGCSYL (337 aa). A coiled-coil region spans residues 135 to 159; that stretch reads AAVTNNIASSEEEVQGLSLNLKAYS. The EGF-like domain maps to 388-422; the sequence is VCKVGPEGCQHHEDCHYRAAFWCECGGPYDLARTC. Cystine bridges form between C389-C402, C396-C410, and C412-C422.

The protein resides in the secreted. Its subcellular location is the nematocyst. In terms of biological role, causes lethal toxicity to the shrimp Palaemon paucidence, and hemolytic activity toward sheep red blood cells. This Phyllodiscus semoni (Night anemone) protein is DELTA-alicitoxin-Pse2a.